A 238-amino-acid polypeptide reads, in one-letter code: Valine-rich protein (238 aa).

The signal sequence occupies residues 1 to 16 (MQAVLLVVALFGAALA).

Prismatic layer of shell (at protein level). Expressed primarily in the mantle with highest level in the mantle edge and lower level in the mantle pallium.

Its subcellular location is the secreted. This chain is Valine-rich protein, found in Pinctada maxima (Silver-lipped pearl oyster).